The chain runs to 357 residues: Protein-arginine kinase (357 aa).

A Phosphagen kinase C-terminal domain is found at 24–256 (VIISSRVRLA…LQLVTQERAA (233 aa)). ATP contacts are provided by residues 27 to 31 (SSRVR), histidine 93, arginine 127, 178 to 182 (RASVM), and 209 to 214 (RGLYGE). An RDXXRA motif of the pArg binding pocket involved in allosteric regulation motif is present at residues 339–344 (RDIFRA).

This sequence belongs to the ATP:guanido phosphotransferase family.

It carries out the reaction L-arginyl-[protein] + ATP = N(omega)-phospho-L-arginyl-[protein] + ADP + H(+). With respect to regulation, appears to be allosterically activated by the binding of pArg-containing polypeptides to the pArg-binding pocket localized in the C-terminal domain of McsB. In terms of biological role, catalyzes the specific phosphorylation of arginine residues in proteins. This is Protein-arginine kinase from Desulforamulus reducens (strain ATCC BAA-1160 / DSM 100696 / MI-1) (Desulfotomaculum reducens).